The chain runs to 468 residues: Sulfate adenylyltransferase subunit 1 (468 aa).

A tr-type G domain is found at 22 to 239; sequence KELLRFLTCG…TVEIASDKNA (218 aa). The tract at residues 31–38 is G1; the sequence is GSVDDGKS. 31–38 lines the GTP pocket; that stretch reads GSVDDGKS. The tract at residues 89 to 93 is G2; sequence GITID. The tract at residues 110–113 is G3; it reads DTPG. Residues 110 to 114 and 165 to 168 contribute to the GTP site; these read DTPGH and NKMD. Residues 165–168 are G4; sequence NKMD. Residues 202 to 204 form a G5 region; sequence SAL.

Belongs to the TRAFAC class translation factor GTPase superfamily. Classic translation factor GTPase family. CysN/NodQ subfamily. As to quaternary structure, heterodimer composed of CysD, the smaller subunit, and CysN.

The catalysed reaction is sulfate + ATP + H(+) = adenosine 5'-phosphosulfate + diphosphate. It functions in the pathway sulfur metabolism; hydrogen sulfide biosynthesis; sulfite from sulfate: step 1/3. Functionally, with CysD forms the ATP sulfurylase (ATPS) that catalyzes the adenylation of sulfate producing adenosine 5'-phosphosulfate (APS) and diphosphate, the first enzymatic step in sulfur assimilation pathway. APS synthesis involves the formation of a high-energy phosphoric-sulfuric acid anhydride bond driven by GTP hydrolysis by CysN coupled to ATP hydrolysis by CysD. The chain is Sulfate adenylyltransferase subunit 1 from Teredinibacter turnerae (strain ATCC 39867 / T7901).